Here is a 448-residue protein sequence, read N- to C-terminus: Immunoglobulin G-binding protein G (448 aa).

The N-terminal stretch at 1–33 (MEKEKKVKYFLRKSAFGLASVSAAFLVGSTVFA) is a signal peptide. Repeat copies occupy residues 104-140 (LAKA…IKDL), 179-215 (LAEA…VKEL), 228-282 (TYKL…TVTE), and 298-352 (TYKL…TVTE). The 2 X 37 AA repeats stretch occupies residues 104–215 (LAKAKADALK…AKTVEGVKEL (112 aa)). The 2 X 55 AA repeats stretch occupies residues 228 to 352 (TYKLILNGKT…DATKTFTVTE (125 aa)). The tract at residues 358–422 (PGDAPTEPEK…TLPTTGEGSN (65 aa)) is disordered. Positions 384–412 (AKDDAKKDDTKKEDAKKPEAKKDDAKKAE) are enriched in basic and acidic residues. The tract at residues 386–410 (DDAKKDDTKKEDAKKPEAKKDDAKK) is 5 X 5 AA repeats of [DE]-D-A-K-K. Residues 414–418 (LPTTG) carry the LPXTG sorting signal motif. Threonine 417 bears the Pentaglycyl murein peptidoglycan amidated threonine mark. A propeptide spans 418–448 (GEGSNPFFTAAALAVMAGAGALAVASKRKED) (removed by sortase).

Its subcellular location is the secreted. The protein localises to the cell wall. Functionally, binds to the constant Fc region of IgG with high affinity. The chain is Immunoglobulin G-binding protein G (spg) from Streptococcus sp. group G.